Reading from the N-terminus, the 46-residue chain is Cysteine-rich venom protein asurin-1 (46 aa).

The protein belongs to the CRISP family. Contains 8 disulfide bonds. Expressed by the venom gland.

It localises to the secreted. In terms of biological role, blocks contraction of smooth muscle elicited by high potassium-induced depolarization, but does not block caffeine-stimulated contraction. May target voltage-gated calcium channels on smooth muscle. The chain is Cysteine-rich venom protein asurin-1 from Austrelaps superbus (Lowland copperhead snake).